The chain runs to 234 residues: Dienlactone hydrolase 2 (234 aa).

Residues C143, D167, and H199 contribute to the active site.

The protein belongs to the dienelactone hydrolase family.

It participates in xenobiotic degradation. Functionally, dienlactone hydrolase; part of the Fusarium detoxification of benzoxazolinone cluster 2 (FDB2) involved in the degradation of benzoxazolinones produced by the host plant. Maize, wheat, and rye produce the 2 benzoxazinone phytoanticipins 2,4-dihy-droxy-7-methoxy-1,4-benzoxazin-3-one (DIMBOA) and 2,4-dihydroxy-1,4-benzoxazin-3-one (DIBOA) that, due to their inherent instability once released, spontaneously degrade to the more stable corresponding benzoxazolinones, 6-methoxy-2-benzoxazolinone (MBOA) and 2-benzoxazolinone (BOA), respectively. The first step in the detoxification of benzoxazolinones involves the hydrolysis of the cyclic ester bond of benzoxazolinones by the FDB1 cluster gamma-lactamase MBL1 to aminophenols. MBL1 is able to convert BOA into 2-aminophenol (2-AP), as well as MBOA into 5-methoxy-2-aminophenol (2-AMP). The FDB2 cluster N-malonyltransferase FDB2/NAT1 then metabolizes aminophenols via N-malonylation to non-toxic malonamic acids. FDB2/NAT1 converts 2-AP into N-(2-hydroxyphenyl) malonamic acid (HPMA) and 2-AMP into N-(2-hydroxy-4-methoxyphenyl) malonamic acid (HMPMA). The duplicated dienlactone hydrolases DLH1 and DLH2 may provide redundant function for hydrolyzing the lactone moiety in the BOA molecule. The roles of the amidases and other enzymes encoded by the 2 FDB clusters have not been identified so far. This chain is Dienlactone hydrolase 2, found in Gibberella moniliformis (strain M3125 / FGSC 7600) (Maize ear and stalk rot fungus).